A 143-amino-acid chain; its full sequence is Large ribosomal subunit protein uL11 (143 aa).

Belongs to the universal ribosomal protein uL11 family. Part of the ribosomal stalk of the 50S ribosomal subunit. Interacts with L10 and the large rRNA to form the base of the stalk. L10 forms an elongated spine to which L12 dimers bind in a sequential fashion forming a multimeric L10(L12)X complex. Post-translationally, one or more lysine residues are methylated.

Its function is as follows. Forms part of the ribosomal stalk which helps the ribosome interact with GTP-bound translation factors. This chain is Large ribosomal subunit protein uL11, found in Nitrosomonas europaea (strain ATCC 19718 / CIP 103999 / KCTC 2705 / NBRC 14298).